The primary structure comprises 60 residues: Large ribosomal subunit protein uL30 (60 aa).

It belongs to the universal ribosomal protein uL30 family. Part of the 50S ribosomal subunit.

The chain is Large ribosomal subunit protein uL30 from Streptococcus mutans serotype c (strain ATCC 700610 / UA159).